Consider the following 475-residue polypeptide: tRNA-2-methylthio-N(6)-dimethylallyladenosine synthase (475 aa).

Positions 3 to 120 (KKLHIKTWGC…LPEMIDQIRA (118 aa)) constitute an MTTase N-terminal domain. Residues Cys12, Cys49, Cys83, Cys157, Cys161, and Cys164 each contribute to the [4Fe-4S] cluster site. The Radical SAM core domain maps to 143 to 375 (RADGPSAFVS…QDRITQQAMR (233 aa)). The region spanning 378–441 (RQMVGTVQRI…TNSLRGVFIR (64 aa)) is the TRAM domain.

Belongs to the methylthiotransferase family. MiaB subfamily. In terms of assembly, monomer. It depends on [4Fe-4S] cluster as a cofactor.

The protein resides in the cytoplasm. The catalysed reaction is N(6)-dimethylallyladenosine(37) in tRNA + (sulfur carrier)-SH + AH2 + 2 S-adenosyl-L-methionine = 2-methylsulfanyl-N(6)-dimethylallyladenosine(37) in tRNA + (sulfur carrier)-H + 5'-deoxyadenosine + L-methionine + A + S-adenosyl-L-homocysteine + 2 H(+). In terms of biological role, catalyzes the methylthiolation of N6-(dimethylallyl)adenosine (i(6)A), leading to the formation of 2-methylthio-N6-(dimethylallyl)adenosine (ms(2)i(6)A) at position 37 in tRNAs that read codons beginning with uridine. In Shewanella halifaxensis (strain HAW-EB4), this protein is tRNA-2-methylthio-N(6)-dimethylallyladenosine synthase.